The primary structure comprises 259 residues: DNA-directed RNA polymerase 30 kDa polypeptide (259 aa).

Residues Tyr-155–Lys-195 form a TFIIS-type zinc finger. The Zn(2+) site is built by Cys-159, Cys-162, Cys-187, and Cys-190. A disordered region spans residues Glu-220–Glu-259. Residues Asn-226–Ala-236 show a composition bias toward pro residues.

It belongs to the poxviridae DNA-directed RNA polymerase 30 kDa subunit family. The DNA-dependent RNA polymerase (vRNAP) consists of eight subunits encoded by early viral genes and termed according to their apparent molecular masses Rpo147, Rpo132, Rpo35, Rpo30, Rpo22, Rpo19, Rpo18, and Rpo7. The same holoenzyme, with the addition of the transcription-specificity factor RAP94, is used for early gene expression.

It is found in the virion. The protein localises to the host cytoplasm. The catalysed reaction is RNA(n) + a ribonucleoside 5'-triphosphate = RNA(n+1) + diphosphate. Part of the DNA-dependent RNA polymerase which catalyzes the transcription of viral DNA into RNA using the four ribonucleoside triphosphates as substrates. Responsible for the transcription of early, intermediate and late genes. DNA-dependent RNA polymerase associates with the early transcription factor (ETF), itself composed of OPG118 and OPG134, thereby allowing the early genes transcription. Late transcription, and probably also intermediate transcription, require newly synthesized RNA polymerase. The chain is DNA-directed RNA polymerase 30 kDa polypeptide (OPG066) from Bos taurus (Bovine).